Here is an 84-residue protein sequence, read N- to C-terminus: Cell division topological specificity factor (84 aa).

It belongs to the MinE family.

In terms of biological role, prevents the cell division inhibition by proteins MinC and MinD at internal division sites while permitting inhibition at polar sites. This ensures cell division at the proper site by restricting the formation of a division septum at the midpoint of the long axis of the cell. This is Cell division topological specificity factor from Burkholderia cenocepacia (strain HI2424).